A 216-amino-acid chain; its full sequence is Large ribosomal subunit protein uL3 (216 aa).

The protein belongs to the universal ribosomal protein uL3 family. As to quaternary structure, part of the 50S ribosomal subunit. Forms a cluster with proteins L14 and L19.

Functionally, one of the primary rRNA binding proteins, it binds directly near the 3'-end of the 23S rRNA, where it nucleates assembly of the 50S subunit. The protein is Large ribosomal subunit protein uL3 of Symbiobacterium thermophilum (strain DSM 24528 / JCM 14929 / IAM 14863 / T).